Consider the following 4036-residue polypeptide: Hybrid PKS-NRPS synthetase iliA (4036 aa).

Positions 7–439 (PEPIAVIGSA…GTNAHAIIES (433 aa)) constitute a Ketosynthase family 3 (KS3) domain. Residues C181, H318, and H359 each act as for beta-ketoacyl synthase activity in the active site. The interval 561 to 886 (IFTGQGAQWP…LKRNGSDVEA (326 aa)) is malonyl-CoA:ACP transacylase (MAT) domain. The interval 955 to 1092 (HELLGRRTPD…GDLVVHLGAD (138 aa)) is N-terminal hotdog fold. A dehydratase (DH) domain region spans residues 955 to 1262 (HELLGRRTPD…ATNMVGEQDA (308 aa)). The PKS/mFAS DH domain maps to 955 to 1263 (HELLGRRTPD…TNMVGEQDAS (309 aa)). The active-site Proton acceptor; for dehydratase activity is H987. A C-terminal hotdog fold region spans residues 1109–1263 (LVNIDGERVY…TNMVGEQDAS (155 aa)). The active-site Proton donor; for dehydratase activity is the D1168. Residues 1402–1601 (EDDMLDRFYM…FSGADTVMHD (200 aa)) form a methyltransferase (MT) domain region. The tract at residues 2136–2277 (KTYFMVGMAG…SVATVIGNIG (142 aa)) is ketoreductase (KR) domain. A Carrier 1 domain is found at 2425–2502 (EAVAAVVKAF…QVCTWATKKV (78 aa)). S2462 is subject to O-(pantetheine 4'-phosphoryl)serine. 2 disordered regions span residues 2520–2583 (AEKT…KLGT) and 2597–2621 (DADA…NRPE). Pro residues predominate over residues 2530-2540 (APAPDAAPAPA). The condensation (C) domain stretch occupies residues 2627–3054 (IMSQAQSRIW…HLDITECEIY (428 aa)). Residues 3088–3485 (SLHSDKSAVK…GTLLCLGRLD (398 aa)) form an adenylation (A) (KR) domain region. The segment at 3088 to 3485 (SLHSDKSAVK…GTLLCLGRLD (398 aa)) is reductase (RED) domain. Residues 3596–3675 (EKMTIREGEV…EMARRIDEHQ (80 aa)) enclose the Carrier 2 domain. S3635 bears the O-(pantetheine 4'-phosphoryl)serine mark.

The protein in the C-terminal section; belongs to the NRP synthetase family.

It carries out the reaction L-tyrosine + holo-[ACP] + 7 malonyl-CoA + acetyl-CoA + 8 AH2 + 2 S-adenosyl-L-methionine + ATP + 4 H(+) = N-[(4E,6E,10S,12Z,14E)-6,10-dimethyl-3-oxohexadeca-4,6,12,14-tetraenoyl]-L-tyrosyl-[ACP] + 8 A + AMP + 2 S-adenosyl-L-homocysteine + 7 CO2 + diphosphate + 8 CoA + 6 H2O. It functions in the pathway mycotoxin biosynthesis. Hybrid PKS-NRPS synthetase; part of the gene cluster that mediates the biosynthesis of ilicicolin H, a 4-hydroxy-2-pyridonealkaloid that has potent and broad antifungal activities by inhibiting the mitochondrial respiration chain. IliA assembles the backbone of ilicicolin H. The PKS portion and trans-acting enoyl reductase iliB work together to construct an octaketide, and two methyl groups are introduced by the MT domain during the chain assembly. The nascent chain is then condensed with tyrosine, catalyzed by the C domain, and the resulting PKS-NRPS hybrid is offloaded by the RED domain to form an advanced tetramic acid intermediate. The biosynthesis of ilicicolin H starts with formation of the tetramic acid by the hybrid PKS-NRPS synthetase iliA with the partnering trans-enoyl reductase iliB since iliA lacks a designated enoylreductase (ER) domain. The cytochrome P450 monooxygenase iliC then catalyzes the ring expansion of the tetramate to the acyclic 2-pyridone. The pericyclase iliD further converts the acyclic 2-pyridone into 8-epi-ilicicolin H. 8-epi-ilicicolin H might then spontaneously convert to ilicicolin H, since ilicicolin H is produced in the absence of the epimerase iliE, in contrast to what was observed for the Talaromyces variabilis ilicolin H biosynthetic pathway. The protein is Hybrid PKS-NRPS synthetase iliA of Neonectria sp. (strain DH2).